Reading from the N-terminus, the 753-residue chain is Translation initiation factor IF-2 (753 aa).

The segment at 1-166 is disordered; it reads MSEKPRRDTG…PVMRPRGPVA (166 aa). 3 stretches are compositionally biased toward low complexity: residues 19–43, 71–81, and 102–122; these read STGQ…ATGA, NARPAAPANAR, and TPAP…TNTR. Residues 133-146 are compositionally biased toward basic and acidic residues; that stretch reads PQPEEREREREAVL. Positions 153-162 are enriched in low complexity; that stretch reads TTTRPVMRPR. Residues 249 to 418 enclose the tr-type G domain; sequence PRPPVVTIMG…LLVADLEDLR (170 aa). Residues 258 to 265 form a G1 region; it reads GHVDHGKT. 258-265 is a binding site for GTP; it reads GHVDHGKT. A G2 region spans residues 283 to 287; that stretch reads GITQH. The interval 304–307 is G3; sequence DTPG. GTP-binding positions include 304 to 308 and 358 to 361; these read DTPGH and NKID. Residues 358–361 form a G4 region; it reads NKID. Positions 394–396 are G5; the sequence is SAR.

The protein belongs to the TRAFAC class translation factor GTPase superfamily. Classic translation factor GTPase family. IF-2 subfamily.

The protein resides in the cytoplasm. Its function is as follows. One of the essential components for the initiation of protein synthesis. Protects formylmethionyl-tRNA from spontaneous hydrolysis and promotes its binding to the 30S ribosomal subunits. Also involved in the hydrolysis of GTP during the formation of the 70S ribosomal complex. This chain is Translation initiation factor IF-2, found in Chloroflexus aggregans (strain MD-66 / DSM 9485).